The primary structure comprises 283 residues: Calpastatin (283 aa).

The span at methionine 1 to methionine 15 shows a compositional bias: polar residues. Disordered stretches follow at residues methionine 1 to methionine 186 and asparagine 212 to lysine 283. A compositionally biased stretch (basic residues) spans proline 21–alanine 30. Lysine 32 participates in a covalent cross-link: Glycyl lysine isopeptide (Lys-Gly) (interchain with G-Cter in SUMO2). Basic and acidic residues predominate over residues valine 46 to serine 65. Position 50 is an N6-acetyllysine (lysine 50). The residue at position 87 (serine 87) is a Phosphoserine. Positions valine 107 to glycine 122 are enriched in low complexity. Serine 133 carries the post-translational modification Phosphoserine. Threonine 135 carries the post-translational modification Phosphothreonine. The Inhibitory domain 1 repeat unit spans residues isoleucine 170–serine 222. Phosphoserine is present on residues serine 222 and serine 243. A compositionally biased stretch (basic and acidic residues) spans lysine 249 to glutamate 258.

This sequence belongs to the protease inhibitor I27 (calpastatin) family.

Functionally, specific inhibition of calpain (calcium-dependent cysteine protease). Plays a key role in postmortem tenderization of meat and have been proposed to be involved in muscle protein degradation in living tissue. In Chlorocebus aethiops (Green monkey), this protein is Calpastatin (CAST).